A 122-amino-acid chain; its full sequence is Holo-[acyl-carrier-protein] synthase (122 aa).

Mg(2+) is bound by residues Asp8 and Glu57.

Belongs to the P-Pant transferase superfamily. AcpS family. Mg(2+) is required as a cofactor.

It is found in the cytoplasm. The enzyme catalyses apo-[ACP] + CoA = holo-[ACP] + adenosine 3',5'-bisphosphate + H(+). In terms of biological role, transfers the 4'-phosphopantetheine moiety from coenzyme A to a Ser of acyl-carrier-protein. The sequence is that of Holo-[acyl-carrier-protein] synthase from Exiguobacterium sp. (strain ATCC BAA-1283 / AT1b).